The sequence spans 1025 residues: Multidrug resistance protein MdtC (1025 aa).

The next 12 helical transmembrane spans lie at I15 to A35, E333 to L353, L360 to C380, L387 to L407, V431 to L451, V469 to L489, L528 to P548, A851 to Y871, V875 to L895, I897 to V917, P953 to G973, and I984 to V1004.

The protein belongs to the resistance-nodulation-cell division (RND) (TC 2.A.6) family. MdtC subfamily. Part of a tripartite efflux system composed of MdtA, MdtB and MdtC. MdtC forms a heteromultimer with MdtB.

It is found in the cell inner membrane. The sequence is that of Multidrug resistance protein MdtC from Klebsiella pneumoniae (strain 342).